The following is a 73-amino-acid chain: Omega-conotoxin CVID (73 aa).

Positions 1–22 are cleaved as a signal peptide; sequence MKLTCVVIVAVLLLTACQLITA. A propeptide spanning residues 23-45 is cleaved from the precursor; sequence DDSRGTQKHRALRSDTKLSMSTR. Disulfide bonds link Cys46/Cys61, Cys53/Cys65, and Cys60/Cys72. Cysteine amide is present on Cys72.

Belongs to the conotoxin O1 superfamily. Expressed by the venom duct.

The protein resides in the secreted. In terms of biological role, omega-conotoxins act at presynaptic membranes, they bind and block voltage-gated calcium channels. This toxin inhibits neurotransmitter release, it blocks N-type calcium channels, probably a N-type (Cav2.2/CACNA1B) calcium channel variant. This Conus catus (Cat cone) protein is Omega-conotoxin CVID.